The sequence spans 53 residues: UPF0391 membrane protein gsr2640 (53 aa).

2 helical membrane-spanning segments follow: residues 4–24 and 32–49; these read LLWLVVVLMVIAALLGFGGVV and WFLIVAAVVLAVVGFVTG.

It belongs to the UPF0391 family.

It is found in the cell membrane. This chain is UPF0391 membrane protein gsr2640, found in Gloeobacter violaceus (strain ATCC 29082 / PCC 7421).